Reading from the N-terminus, the 168-residue chain is Ubiquitin-fold modifier-conjugating enzyme 1 (168 aa).

The active-site Glycyl thioester intermediate is cysteine 119.

This sequence belongs to the ubiquitin-conjugating enzyme family. UFC1 subfamily.

Its function is as follows. E2-like enzyme which forms an intermediate with UFM1 via a thioester linkage. This is Ubiquitin-fold modifier-conjugating enzyme 1 from Drosophila grimshawi (Hawaiian fruit fly).